The primary structure comprises 322 residues: 4-diphosphocytidyl-2-C-methyl-D-erythritol kinase (322 aa).

K27 is a catalytic residue. ATP is bound at residue 112–122; that stretch reads PVAGGMAGGSA. The active site involves D154.

It belongs to the GHMP kinase family. IspE subfamily.

The enzyme catalyses 4-CDP-2-C-methyl-D-erythritol + ATP = 4-CDP-2-C-methyl-D-erythritol 2-phosphate + ADP + H(+). The protein operates within isoprenoid biosynthesis; isopentenyl diphosphate biosynthesis via DXP pathway; isopentenyl diphosphate from 1-deoxy-D-xylulose 5-phosphate: step 3/6. Its function is as follows. Catalyzes the phosphorylation of the position 2 hydroxy group of 4-diphosphocytidyl-2C-methyl-D-erythritol. The polypeptide is 4-diphosphocytidyl-2-C-methyl-D-erythritol kinase (Mycolicibacterium smegmatis (strain ATCC 700084 / mc(2)155) (Mycobacterium smegmatis)).